Consider the following 80-residue polypeptide: Acyl carrier protein (80 aa).

Residues 1–79 (MSQEEILQKV…DAVKFIEAKK (79 aa)) form the Carrier domain. Ser-39 carries the post-translational modification O-(pantetheine 4'-phosphoryl)serine.

The protein belongs to the acyl carrier protein (ACP) family. In terms of processing, 4'-phosphopantetheine is transferred from CoA to a specific serine of apo-ACP by AcpS. This modification is essential for activity because fatty acids are bound in thioester linkage to the sulfhydryl of the prosthetic group.

The protein resides in the cytoplasm. The protein operates within lipid metabolism; fatty acid biosynthesis. Its function is as follows. Carrier of the growing fatty acid chain in fatty acid biosynthesis. This chain is Acyl carrier protein, found in Prochlorococcus marinus (strain MIT 9515).